We begin with the raw amino-acid sequence, 130 residues long: Glycine cleavage system H protein (130 aa).

Residues 23–105 (IGIIGITDFA…YGKGWMIKVE (83 aa)) enclose the Lipoyl-binding domain. Position 64 is an N6-lipoyllysine (Lys64).

The protein belongs to the GcvH family. As to quaternary structure, the glycine cleavage system is composed of four proteins: P, T, L and H. The cofactor is (R)-lipoate.

Its function is as follows. The glycine cleavage system catalyzes the degradation of glycine. The H protein shuttles the methylamine group of glycine from the P protein to the T protein. The protein is Glycine cleavage system H protein of Carboxydothermus hydrogenoformans (strain ATCC BAA-161 / DSM 6008 / Z-2901).